We begin with the raw amino-acid sequence, 166 residues long: UPF0304 protein VC_1871 (166 aa).

The protein belongs to the UPF0304 family.

The protein is UPF0304 protein VC_1871 of Vibrio cholerae serotype O1 (strain ATCC 39315 / El Tor Inaba N16961).